The chain runs to 215 residues: Pyridoxine/pyridoxamine 5'-phosphate oxidase (215 aa).

Residues 9-12 (RRDY) and K69 each bind substrate. Residues 64-69 (RVLLLK), 79-80 (FT), K86, and Q108 each bind FMN. Residues Y126, R130, and S134 each contribute to the substrate site. FMN contacts are provided by residues 143-144 (QS) and W188. Residue 194-196 (RLH) coordinates substrate. Position 198 (R198) interacts with FMN.

This sequence belongs to the pyridoxamine 5'-phosphate oxidase family. In terms of assembly, homodimer. It depends on FMN as a cofactor.

The enzyme catalyses pyridoxamine 5'-phosphate + O2 + H2O = pyridoxal 5'-phosphate + H2O2 + NH4(+). It carries out the reaction pyridoxine 5'-phosphate + O2 = pyridoxal 5'-phosphate + H2O2. The protein operates within cofactor metabolism; pyridoxal 5'-phosphate salvage; pyridoxal 5'-phosphate from pyridoxamine 5'-phosphate: step 1/1. Its pathway is cofactor metabolism; pyridoxal 5'-phosphate salvage; pyridoxal 5'-phosphate from pyridoxine 5'-phosphate: step 1/1. Catalyzes the oxidation of either pyridoxine 5'-phosphate (PNP) or pyridoxamine 5'-phosphate (PMP) into pyridoxal 5'-phosphate (PLP). This chain is Pyridoxine/pyridoxamine 5'-phosphate oxidase, found in Pseudomonas syringae pv. tomato (strain ATCC BAA-871 / DC3000).